The sequence spans 560 residues: DNA ligase B (560 aa).

K124 functions as the N6-AMP-lysine intermediate in the catalytic mechanism.

The protein belongs to the NAD-dependent DNA ligase family. LigB subfamily.

It carries out the reaction NAD(+) + (deoxyribonucleotide)n-3'-hydroxyl + 5'-phospho-(deoxyribonucleotide)m = (deoxyribonucleotide)n+m + AMP + beta-nicotinamide D-nucleotide.. Catalyzes the formation of phosphodiester linkages between 5'-phosphoryl and 3'-hydroxyl groups in double-stranded DNA using NAD as a coenzyme and as the energy source for the reaction. This is DNA ligase B from Shigella sonnei (strain Ss046).